The following is a 443-amino-acid chain: ATP-dependent protease ATPase subunit HslU (443 aa).

ATP contacts are provided by residues Ile-18, 60 to 65, Asp-256, Glu-321, and Arg-393; that span reads GVGKTE.

This sequence belongs to the ClpX chaperone family. HslU subfamily. A double ring-shaped homohexamer of HslV is capped on each side by a ring-shaped HslU homohexamer. The assembly of the HslU/HslV complex is dependent on binding of ATP.

It is found in the cytoplasm. ATPase subunit of a proteasome-like degradation complex; this subunit has chaperone activity. The binding of ATP and its subsequent hydrolysis by HslU are essential for unfolding of protein substrates subsequently hydrolyzed by HslV. HslU recognizes the N-terminal part of its protein substrates and unfolds these before they are guided to HslV for hydrolysis. In Nitrosospira multiformis (strain ATCC 25196 / NCIMB 11849 / C 71), this protein is ATP-dependent protease ATPase subunit HslU.